The sequence spans 256 residues: UPF0246 protein SPO0106 (256 aa).

This sequence belongs to the UPF0246 family.

This is UPF0246 protein SPO0106 from Ruegeria pomeroyi (strain ATCC 700808 / DSM 15171 / DSS-3) (Silicibacter pomeroyi).